The primary structure comprises 388 residues: Mannitol-1-phosphate 5-dehydrogenase (388 aa).

5–16 (AVHFGGGNIGRG) provides a ligand contact to NAD(+). K213 is a catalytic residue.

Belongs to the mannitol dehydrogenase family. As to quaternary structure, monomer.

It catalyses the reaction D-mannitol 1-phosphate + NAD(+) = beta-D-fructose 6-phosphate + NADH + H(+). Its function is as follows. Catalyzes the NAD(H)-dependent interconversion of D-fructose 6-phosphate and D-mannitol 1-phosphate in the mannitol metabolic pathway. This is Mannitol-1-phosphate 5-dehydrogenase from Coccidioides immitis (strain RS) (Valley fever fungus).